Consider the following 118-residue polypeptide: NADH-quinone oxidoreductase subunit A (118 aa).

The next 3 membrane-spanning stretches (helical) occupy residues 5–25 (YLGI…AFAV), 61–81 (FLYA…YPWA), and 90–110 (FAIV…WYAW).

It belongs to the complex I subunit 3 family. In terms of assembly, NDH-1 is composed of 14 different subunits. Subunits NuoA, H, J, K, L, M, N constitute the membrane sector of the complex.

The protein resides in the cell membrane. The catalysed reaction is a quinone + NADH + 5 H(+)(in) = a quinol + NAD(+) + 4 H(+)(out). Functionally, NDH-1 shuttles electrons from NADH, via FMN and iron-sulfur (Fe-S) centers, to quinones in the respiratory chain. The immediate electron acceptor for the enzyme in this species is believed to be a menaquinone. Couples the redox reaction to proton translocation (for every two electrons transferred, four hydrogen ions are translocated across the cytoplasmic membrane), and thus conserves the redox energy in a proton gradient. In Heliobacterium modesticaldum (strain ATCC 51547 / Ice1), this protein is NADH-quinone oxidoreductase subunit A.